The chain runs to 90 residues: uncharacterized protein (90 aa).

The interval 53 to 90 (WRARPDANDADTTSSSSSSETCTESDDSSDVPPARYAV) is disordered. A compositionally biased stretch (low complexity) spans 63-74 (DTTSSSSSSETC).

This is an uncharacterized protein from Orgyia pseudotsugata (Douglas-fir tussock moth).